We begin with the raw amino-acid sequence, 161 residues long: N5-carboxyaminoimidazole ribonucleotide mutase (161 aa).

Substrate is bound by residues serine 9, aspartate 12, and arginine 39.

The protein belongs to the AIR carboxylase family. Class I subfamily.

It carries out the reaction 5-carboxyamino-1-(5-phospho-D-ribosyl)imidazole + H(+) = 5-amino-1-(5-phospho-D-ribosyl)imidazole-4-carboxylate. The protein operates within purine metabolism; IMP biosynthesis via de novo pathway; 5-amino-1-(5-phospho-D-ribosyl)imidazole-4-carboxylate from 5-amino-1-(5-phospho-D-ribosyl)imidazole (N5-CAIR route): step 2/2. Functionally, catalyzes the conversion of N5-carboxyaminoimidazole ribonucleotide (N5-CAIR) to 4-carboxy-5-aminoimidazole ribonucleotide (CAIR). This Vibrio cholerae serotype O1 (strain ATCC 39315 / El Tor Inaba N16961) protein is N5-carboxyaminoimidazole ribonucleotide mutase.